A 212-amino-acid polypeptide reads, in one-letter code: uncharacterized protein (212 aa).

A run of 4 helical transmembrane segments spans residues 34–54 (IFGIVLVILSLPSALPIPAPG), 59–79 (FGVLIFLVAIQLMAGRQELWL), 126–146 (ILMGITVGSMAISMMIPIPGT), and 171–191 (AGMIFSVLIGVLMVSVIYVFF).

The protein to R.meliloti ExoD.

The protein resides in the cell membrane. This is an uncharacterized protein from Synechocystis sp. (strain ATCC 27184 / PCC 6803 / Kazusa).